The chain runs to 208 residues: Guanylate kinase (208 aa).

A Guanylate kinase-like domain is found at 3 to 181 (GSLFIITAAS…ALTELKAIIV (179 aa)). Position 10–17 (10–17 (AASGTGKT)) interacts with ATP.

It belongs to the guanylate kinase family.

It localises to the cytoplasm. It catalyses the reaction GMP + ATP = GDP + ADP. In terms of biological role, essential for recycling GMP and indirectly, cGMP. This chain is Guanylate kinase, found in Psychrobacter arcticus (strain DSM 17307 / VKM B-2377 / 273-4).